Here is a 182-residue protein sequence, read N- to C-terminus: Helofensin-3 (182 aa).

Positions 1–26 (MQMDWLFIAVISGIGLLSSGVPGTQG) are cleaved as a signal peptide. The C(6)C(4)C(9)C(6)CC 1; approximate repeat unit spans residues 27 to 64 (AYTTEQCRALNGSCNFYACFPKNVIIGKCDWWGWSCCA). A C(6)C(4)C(9)C(6)CC 2; approximate repeat occupies 65–101 (RTPLERCTAKKGTCTKTGCTKTDTDHGPCDGGAQCCQ). The stretch at 102–138 (RDPVKYCKFHGNVCGRGKCPMDHIPIGECTPGYPCCK) is one C(6)C(4)C(9)C(6)CC 3; approximate repeat. The stretch at 139–176 (RDGPAYCKSKGGKCLNRCPQIVPTNVIGVCATGVPCCK) is one C(6)C(4)C(9)C(6)CC 4; approximate repeat.

The protein belongs to the beta-defensin family. Helofensin subfamily. In terms of tissue distribution, expressed by the mandibular venom gland.

The protein localises to the secreted. Lethal toxin which possesses an inhibitory effect on direct electrical stimulation of the isolated hemi-diaphragm of mice. Neither hemorrhagic nor hemolytic activities are detected. Phospholipase A2 activity, proteolytic activity and arginine esterolytic activity are absent. This chain is Helofensin-3, found in Heloderma suspectum cinctum (Banded Gila monster).